A 513-amino-acid polypeptide reads, in one-letter code: Tigger transposable element-derived protein 4 (513 aa).

The HTH psq-type domain maps to 12–63 (PVTVKKKKSLSIEEKIDIINAVESGKKKAEIAAEYGIKKNSLSSIMKNKDKV). DNA-binding regions (H-T-H motif) lie at residues 39-59 (KAEI…IMKN) and 108-139 (PMLR…FKSR). Residues 75–146 (KRKRLRTAFY…KSRYGLVFRA (72 aa)) form the HTH CENPB-type domain. A DDE-1 domain is found at 174–375 (YHPKNVFNVK…VTPETIVKSY (202 aa)). Over residues 433-448 (TQKDDAEWAGESKQDE) the composition is skewed to basic and acidic residues. The disordered stretch occupies residues 433 to 473 (TQKDDAEWAGESKQDETGLYTSDEEEEDSGALEVDLPSPSK).

The protein belongs to the tigger transposable element derived protein family.

The protein resides in the nucleus. This chain is Tigger transposable element-derived protein 4 (Tigd4), found in Mus musculus (Mouse).